We begin with the raw amino-acid sequence, 214 residues long: Cutinase CUT2 (214 aa).

The N-terminal stretch at 1 to 18 (MQFSLSIATAILAATASA) is a signal peptide. A disulfide bridge links C40 with C117. Catalysis depends on S128, which acts as the Nucleophile. A disulfide bond links C179 and C186. D183 is a catalytic residue. H196 functions as the Proton donor/acceptor in the catalytic mechanism.

It belongs to the cutinase family. The 2 disulfide bonds play a critical role in holding the catalytic residues in juxta-position; reduction of the disulfide bridges results in the complete inactivation of the enzyme.

It localises to the secreted. It carries out the reaction cutin + H2O = cutin monomers.. Catalyzes the hydrolysis of complex carboxylic polyesters found in the cell wall of plants. Degrades cutin, a macromolecule that forms the structure of the plant cuticle. Required for efficient penetration of the host plant cuticle by the appressorium during the initial stage of fungal infection. This Pyricularia oryzae (strain 70-15 / ATCC MYA-4617 / FGSC 8958) (Rice blast fungus) protein is Cutinase CUT2.